A 557-amino-acid chain; its full sequence is Potassium-transporting ATPase potassium-binding subunit (557 aa).

12 consecutive transmembrane segments (helical) span residues 5 to 25 (GFLL…PLGS), 63 to 83 (LCAI…MLLG), 132 to 152 (GLTV…FALI), 170 to 190 (LLRI…LFFI), 253 to 273 (FVQM…FGEV), 283 to 303 (LLWA…WAEV), 329 to 349 (VLVS…AVIA), 356 to 376 (ALGG…FGGV), 379 to 399 (GLYG…LMIG), 416 to 436 (LTAL…ALAM), 484 to 504 (LLAF…MAIA), and 526 to 546 (LFVG…FIPA).

Belongs to the KdpA family. The system is composed of three essential subunits: KdpA, KdpB and KdpC.

It is found in the cell inner membrane. Functionally, part of the high-affinity ATP-driven potassium transport (or Kdp) system, which catalyzes the hydrolysis of ATP coupled with the electrogenic transport of potassium into the cytoplasm. This subunit binds the periplasmic potassium ions and delivers the ions to the membrane domain of KdpB through an intramembrane tunnel. The sequence is that of Potassium-transporting ATPase potassium-binding subunit from Escherichia coli (strain SE11).